A 472-amino-acid chain; its full sequence is Cannabinoid receptor 1 (472 aa).

The Extracellular portion of the chain corresponds to 1-116 (MKSILDGLAD…CFMVLNPSQQ (116 aa)). The tract at residues 2–23 (KSILDGLADTTFRTITTDLLYV) is required for mitochondrial localization. 2 N-linked (GlcNAc...) asparagine glycosylation sites follow: Asn-77 and Asn-83. The chain crosses the membrane as a helical span at residues 117–142 (LAIAVLSLTLGTFTVLENLLVLCVIL). The Cytoplasmic segment spans residues 143-154 (HSRSLRCRPSYH). The chain crosses the membrane as a helical span at residues 155–175 (FIGSLAVADLLGSVIFVYSFI). The Extracellular segment spans residues 176 to 187 (DFHVFHRKDSRN). A helical transmembrane segment spans residues 188–212 (VFLFKLGGVTASFTASVGSLFLTAI). The Cytoplasmic segment spans residues 213–232 (DRYISIHRPLAYKRIVTRPK). The chain crosses the membrane as a helical span at residues 233–255 (AVVAFCLMWTIAIVIAVLPLLGW). At 256–273 (NCEKLQSVCSDIFPHIDE) the chain is on the extracellular side. A helical membrane pass occupies residues 274 to 299 (TYLMFWIGVTSVLLLFIVYAYMYILW). The Cytoplasmic portion of the chain corresponds to 300–344 (KAHSHAVRMIQRGTQKSIIIHTSEDGKVQVTRPDQARMDIRLAKT). A helical membrane pass occupies residues 345-365 (LVLILVVLIICWGPLLAIMVY). Topologically, residues 366-377 (DVFGKMNKLIKT) are extracellular. The helical transmembrane segment at 378–399 (VFAFCSMLCLLNSTVNPIIYAL) threads the bilayer. At 400 to 472 (RSKDLRHAFR…VSTDTSAEAL (73 aa)) the chain is on the cytoplasmic side. Cys-415 carries the S-palmitoyl cysteine lipid modification. A phosphoserine mark is found at Ser-425 and Ser-429.

This sequence belongs to the G-protein coupled receptor 1 family. Interacts (via C-terminus) with CNRIP1; this interaction attenuates constitutive, but not agonist-dependent, inhibition of voltage-gated Ca(2+) channels in neurons. Associates with G protein alpha subunits, including G(i) alpha-1/GNAI1, G(i) alpha-3/GNAI3 and G(o)-alpha/GNAO1; palmitoylation is important for interaction with GNAI3 and GNAO1. In terms of processing, palmitoylation at Cys-415 is important for recruitment at plasma membrane and lipid rafts and association with G protein alpha subunits. In terms of tissue distribution, widely expressed, with highest levels in fetal and adult brain. Expression levels of isoform 2 and isoform 3 are much lower than those of isoform 1.

It localises to the cell membrane. It is found in the membrane raft. The protein resides in the mitochondrion outer membrane. Its subcellular location is the cell projection. The protein localises to the axon. It localises to the presynapse. Its activity is regulated as follows. Hemopressin, a peptide derived from hemoglobin subunit alpha (HBA1 and/or HBA2), acts as an antagonist peptide: hemopressin-binding efficiently blocks cannabinoid receptor CNR1 and subsequent signaling. Its function is as follows. G-protein coupled receptor for endogenous cannabinoids (eCBs), including N-arachidonoylethanolamide (also called anandamide or AEA) and 2-arachidonoylglycerol (2-AG), as well as phytocannabinoids, such as delta(9)-tetrahydrocannabinol (THC). Mediates many cannabinoid-induced effects, acting, among others, on food intake, memory loss, gastrointestinal motility, catalepsy, ambulatory activity, anxiety, chronic pain. Signaling typically involves reduction in cyclic AMP. In the hypothalamus, may have a dual effect on mitochondrial respiration depending upon the agonist dose and possibly upon the cell type. Increases respiration at low doses, while decreases respiration at high doses. At high doses, CNR1 signal transduction involves G-protein alpha-i protein activation and subsequent inhibition of mitochondrial soluble adenylate cyclase, decrease in cyclic AMP concentration, inhibition of protein kinase A (PKA)-dependent phosphorylation of specific subunits of the mitochondrial electron transport system, including NDUFS2. In the hypothalamus, inhibits leptin-induced reactive oxygen species (ROS) formation and mediates cannabinoid-induced increase in SREBF1 and FASN gene expression. In response to cannabinoids, drives the release of orexigenic beta-endorphin, but not that of melanocyte-stimulating hormone alpha/alpha-MSH, from hypothalamic POMC neurons, hence promoting food intake. In the hippocampus, regulates cellular respiration and energy production in response to cannabinoids. Involved in cannabinoid-dependent depolarization-induced suppression of inhibition (DSI), a process in which depolarization of CA1 postsynaptic pyramidal neurons mobilizes eCBs, which retrogradely activate presynaptic CB1 receptors, transiently decreasing GABAergic inhibitory neurotransmission. Also reduces excitatory synaptic transmission. In superior cervical ganglions and cerebral vascular smooth muscle cells, inhibits voltage-gated Ca(2+) channels in a constitutive, as well as agonist-dependent manner. In cerebral vascular smooth muscle cells, cannabinoid-induced inhibition of voltage-gated Ca(2+) channels leads to vasodilation and decreased vascular tone. Induces leptin production in adipocytes and reduces LRP2-mediated leptin clearance in the kidney, hence participating in hyperleptinemia. In adipose tissue, CNR1 signaling leads to increased expression of SREBF1, ACACA and FASN genes. In the liver, activation by endocannabinoids leads to increased de novo lipogenesis and reduced fatty acid catabolism, associated with increased expression of SREBF1/SREBP-1, GCK, ACACA, ACACB and FASN genes. May also affect de novo cholesterol synthesis and HDL-cholesteryl ether uptake. Peripherally modulates energy metabolism. In high carbohydrate diet-induced obesity, may decrease the expression of mitochondrial dihydrolipoyl dehydrogenase/DLD in striated muscles, as well as that of selected glucose/ pyruvate metabolic enzymes, hence affecting energy expenditure through mitochondrial metabolism. In response to cannabinoid anandamide, elicits a pro-inflammatory response in macrophages, which involves NLRP3 inflammasome activation and IL1B and IL18 secretion. In macrophages infiltrating pancreatic islets, this process may participate in the progression of type-2 diabetes and associated loss of pancreatic beta-cells. In terms of biological role, binds both 2-arachidonoylglycerol (2-AG) and anandamide. Only binds 2-arachidonoylglycerol (2-AG) with high affinity. Contrary to its effect on isoform 1, 2-AG behaves as an inverse agonist on isoform 2 in assays measuring GTP binding to membranes. Functionally, only binds 2-arachidonoylglycerol (2-AG) with high affinity. Contrary to its effect on isoform 1, 2-AG behaves as an inverse agonist on isoform 3 in assays measuring GTP binding to membranes. The protein is Cannabinoid receptor 1 (CNR1) of Homo sapiens (Human).